A 313-amino-acid polypeptide reads, in one-letter code: MKALYWLLIGFLSSTLAEVLSSSHPAGVFDAWGIGVIFPLYSLHALVLGGWLFRLGVNWQRLFLFGCVFGMYEAYITKVLWNPYWGPDAFQFLGIYWFQFAVLVFFWHPIFAFILPLLIAEYIYTSSNTLLNAAKQFPLMQKAGKKFALLLAALAGLNQSVNTPPSMFWVALLSFFTILTPSFLLEKRKIEDIMPSGRVLKLLTFALIILYLFWTFALRFDKMGSFSGQLVVWLFYLLLFYLIINIKSCKPESKTSEKKGERRFFAACFLVYLTAFLITSSFKAFPAAMLFLLAGTAYGTIVFASILIKFLMR.

A run of 9 helical transmembrane segments spans residues 31 to 53 (AWGI…GWLF), 62 to 84 (LFLF…WNPY), 104 to 126 (VFFW…IYTS), 147 to 161 (FALL…NQSV), 166 to 185 (SMFW…SFLL), 198 to 220 (RVLK…ALRF), 225 to 244 (SFSG…YLII), 264 to 282 (FFAA…TSSF), and 286 to 308 (PAAM…SILI).

The protein localises to the cell membrane. This is an uncharacterized protein from Archaeoglobus fulgidus (strain ATCC 49558 / DSM 4304 / JCM 9628 / NBRC 100126 / VC-16).